A 117-amino-acid polypeptide reads, in one-letter code: PBP1-interacting protein XAC1 (117 aa).

Positions 1-60 (MSKAPSQPAKKWMSARTLAKSEDATNRKSNTAAPASQPSQQPASVMHERPTPPPPAPVQL) are disordered. Low complexity predominate over residues 32 to 44 (AAPASQPSQQPAS).

Forms a complex composed of at least MKT1, PBP1, XAC1 and LSM12. Forms a complex composed of at least MKT1L, PBP1, XAC1 and LSM12.

The protein localises to the cytoplasm. Its function is as follows. Involved in post-transcriptional regulation of gene expression. This chain is PBP1-interacting protein XAC1, found in Trypanosoma brucei brucei (strain 927/4 GUTat10.1).